A 234-amino-acid chain; its full sequence is Leucyl/phenylalanyl-tRNA--protein transferase (234 aa).

It belongs to the L/F-transferase family.

The protein localises to the cytoplasm. It catalyses the reaction N-terminal L-lysyl-[protein] + L-leucyl-tRNA(Leu) = N-terminal L-leucyl-L-lysyl-[protein] + tRNA(Leu) + H(+). It carries out the reaction N-terminal L-arginyl-[protein] + L-leucyl-tRNA(Leu) = N-terminal L-leucyl-L-arginyl-[protein] + tRNA(Leu) + H(+). The enzyme catalyses L-phenylalanyl-tRNA(Phe) + an N-terminal L-alpha-aminoacyl-[protein] = an N-terminal L-phenylalanyl-L-alpha-aminoacyl-[protein] + tRNA(Phe). Functions in the N-end rule pathway of protein degradation where it conjugates Leu, Phe and, less efficiently, Met from aminoacyl-tRNAs to the N-termini of proteins containing an N-terminal arginine or lysine. In Shigella boydii serotype 18 (strain CDC 3083-94 / BS512), this protein is Leucyl/phenylalanyl-tRNA--protein transferase.